The sequence spans 143 residues: Nucleoside diphosphate kinase (143 aa).

Residues Lys-11, Phe-59, Arg-87, Thr-93, Arg-104, and Asn-114 each coordinate ATP. His-117 (pros-phosphohistidine intermediate) is an active-site residue.

Belongs to the NDK family. As to quaternary structure, homotetramer. Requires Mg(2+) as cofactor.

The protein resides in the cytoplasm. The enzyme catalyses a 2'-deoxyribonucleoside 5'-diphosphate + ATP = a 2'-deoxyribonucleoside 5'-triphosphate + ADP. The catalysed reaction is a ribonucleoside 5'-diphosphate + ATP = a ribonucleoside 5'-triphosphate + ADP. Its function is as follows. Major role in the synthesis of nucleoside triphosphates other than ATP. The ATP gamma phosphate is transferred to the NDP beta phosphate via a ping-pong mechanism, using a phosphorylated active-site intermediate. The polypeptide is Nucleoside diphosphate kinase (Cronobacter sakazakii (strain ATCC BAA-894) (Enterobacter sakazakii)).